The chain runs to 307 residues: Ribonuclease Z (307 aa).

The Zn(2+) site is built by H63, H65, D67, H68, H143, D213, and H271. D67 serves as the catalytic Proton acceptor.

This sequence belongs to the RNase Z family. As to quaternary structure, homodimer. Zn(2+) serves as cofactor.

It carries out the reaction Endonucleolytic cleavage of RNA, removing extra 3' nucleotides from tRNA precursor, generating 3' termini of tRNAs. A 3'-hydroxy group is left at the tRNA terminus and a 5'-phosphoryl group is left at the trailer molecule.. Its function is as follows. Zinc phosphodiesterase, which displays some tRNA 3'-processing endonuclease activity. Probably involved in tRNA maturation, by removing a 3'-trailer from precursor tRNA. The protein is Ribonuclease Z of Lactococcus lactis subsp. lactis (strain IL1403) (Streptococcus lactis).